The chain runs to 203 residues: GTP-binding protein yptV1 (203 aa).

GTP is bound by residues 15–23 (GDSGVGKSC), 33–40 (YTESYIST), 63–67 (DTAGQ), 121–124 (NKSD), and 151–153 (SAK). Residues 37-45 (YISTIGVDF) carry the Effector region motif. The segment at 173–203 (MASQPVPPKPGGPVVRPTEGKPINNKSSSCC) is disordered. Residues cysteine 202 and cysteine 203 are each lipidated (S-geranylgeranyl cysteine).

Belongs to the small GTPase superfamily. Rab family.

The protein localises to the cell membrane. Functionally, protein transport. Probably involved in vesicular traffic. The polypeptide is GTP-binding protein yptV1 (YPTV1) (Volvox carteri (Green alga)).